The chain runs to 300 residues: Protoheme IX farnesyltransferase (300 aa).

Transmembrane regions (helical) follow at residues 20–40 (ITKA…YLLG), 49–69 (WSVL…SNAY), 97–117 (VTAL…LYTI), 122–142 (AMFA…LKTV), 145–165 (LSVF…WVAA), 176–196 (LFLI…WFLY), 217–237 (ALQV…PVLG), 242–262 (LFIS…MLFY), and 278–298 (LMLV…VDKF).

This sequence belongs to the UbiA prenyltransferase family. Protoheme IX farnesyltransferase subfamily.

Its subcellular location is the cell inner membrane. It carries out the reaction heme b + (2E,6E)-farnesyl diphosphate + H2O = Fe(II)-heme o + diphosphate. The protein operates within porphyrin-containing compound metabolism; heme O biosynthesis; heme O from protoheme: step 1/1. Converts heme B (protoheme IX) to heme O by substitution of the vinyl group on carbon 2 of heme B porphyrin ring with a hydroxyethyl farnesyl side group. This is Protoheme IX farnesyltransferase from Flavobacterium johnsoniae (strain ATCC 17061 / DSM 2064 / JCM 8514 / BCRC 14874 / CCUG 350202 / NBRC 14942 / NCIMB 11054 / UW101) (Cytophaga johnsonae).